The primary structure comprises 585 residues: Serine protease HtrA-like (585 aa).

The disordered stretch occupies residues 1–184; the sequence is MDNNKKQVIP…QPKDKDNDNT (184 aa). Over residues 21–82 the composition is skewed to basic and acidic residues; it reads YFHNVEREER…IHQQRDDKSY (62 aa). Polar residues predominate over residues 84 to 94; that stretch reads QKTLNQNNQMN. Basic and acidic residues predominate over residues 95 to 113; that stretch reads KSKDDDNKIGEESLHDVRV. Positions 114–124 are enriched in polar residues; that stretch reads SSDTSTLPHQN. The segment covering 126 to 139 has biased composition (basic and acidic residues); that stretch reads SIKDYDDSGNESKQ. The segment covering 151–175 has biased composition (polar residues); the sequence is GVNSNHTEQDSRSTQPYSSKHSYSQ. The chain crosses the membrane as a helical span at residues 224-244; the sequence is MLIIIGIIVLLLILNAIFTTV. Catalysis depends on charge relay system residues H320, D350, and S435. The region spanning 516 to 575 is the PDZ domain; that stretch reads GVLIGEVKENGLGDKAGLKKGDVIVELDGKKIEDNLRYRQVIYSHYDDQKTITAKIYRNG.

Belongs to the peptidase S1C family.

It localises to the cell membrane. This Staphylococcus epidermidis (strain ATCC 35984 / DSM 28319 / BCRC 17069 / CCUG 31568 / BM 3577 / RP62A) protein is Serine protease HtrA-like.